The chain runs to 329 residues: Cathepsin K (329 aa).

Positions 1–15 are cleaved as a signal peptide; sequence MWVFKFLLLPVVSFA. A propeptide spans 16 to 114 (activation peptide); the sequence is LSPEETLDTQ…TLYTPEWEGR (99 aa). A glycan (N-linked (GlcNAc...) asparagine) is linked at Asn-103. Cystine bridges form between Cys-136–Cys-177 and Cys-170–Cys-210. Cys-139 is an active-site residue. Asn-213 is a glycosylation site (N-linked (GlcNAc...) asparagine). A disulfide bridge links Cys-269 with Cys-318. Catalysis depends on residues His-276 and Asn-296.

Belongs to the peptidase C1 family.

The protein localises to the lysosome. The protein resides in the secreted. It is found in the apical cell membrane. The enzyme catalyses Broad proteolytic activity. With small-molecule substrates and inhibitors, the major determinant of specificity is P2, which is preferably Leu, Met &gt; Phe, and not Arg.. Its function is as follows. Thiol protease involved in osteoclastic bone resorption and may participate partially in the disorder of bone remodeling. Displays potent endoprotease activity against fibrinogen at acid pH. May play an important role in extracellular matrix degradation. Involved in the release of thyroid hormone thyroxine (T4) by limited proteolysis of TG/thyroglobulin in the thyroid follicle lumen. This is Cathepsin K (Ctsk) from Rattus norvegicus (Rat).